Consider the following 193-residue polypeptide: Protein PrsJ (193 aa).

Residues Met-1–Ala-27 form the signal peptide.

Its subcellular location is the periplasm. Its function is as follows. This protein maintains pilus integrity and thus is an important participant in pilus assembly. It may function as molecular chaperone directly or indirectly in the correct assembly of PapA subunits. The chain is Protein PrsJ (prsJ) from Escherichia coli.